Reading from the N-terminus, the 273-residue chain is Salivary glue protein Sgs-3 (273 aa).

Residues 1 to 23 (MKLTIAISLASILLLSVAHVAQG) form the signal peptide. Positions 47–57 (TTTTTTTTCAP) are enriched in low complexity. The interval 47 to 225 (TTTTTTTTCA…TPKPTNKPGC (179 aa)) is disordered. The segment covering 58-67 (PTRPPPPPCT) has biased composition (pro residues). Low complexity predominate over residues 83–225 (RRTTTTTRQT…TPKPTNKPGC (143 aa)).

The protein is Salivary glue protein Sgs-3 (Sgs3) of Drosophila yakuba (Fruit fly).